A 348-amino-acid polypeptide reads, in one-letter code: MNRTDELRTARIESLVTPAELALRYPVTPGVATHVTDSRRRIEKILNGEDKRLLVIIGPCSIHDLTAAMEYATRLQSLRNQYQSRLEIVMRTYFEKPRTVVGWKGLISDPDLNGSYRVNHGLELARKLLLQVNELGVPTATEFLDMVTGQFIADLISWGAIGARTTESQIHREMASALSCPVGFKNGTDGNTRIAVDAIRAARASHMFLSPDKNGQMTIYQTSGNPYGHIIMRGGKKPNYHADDIAAACDTLHEFDLPEHLVVDFSHGNCQKQHRRQLEVCEDICQQIRNGSTAIAGIMAESFLREGTQKIVGGQPLTYGQSITDPCLGWEDTERLVEKLASAVDTRF.

The protein belongs to the class-I DAHP synthase family.

It carries out the reaction D-erythrose 4-phosphate + phosphoenolpyruvate + H2O = 7-phospho-2-dehydro-3-deoxy-D-arabino-heptonate + phosphate. It participates in metabolic intermediate biosynthesis; chorismate biosynthesis; chorismate from D-erythrose 4-phosphate and phosphoenolpyruvate: step 1/7. Functionally, stereospecific condensation of phosphoenolpyruvate (PEP) and D-erythrose-4-phosphate (E4P) giving rise to 3-deoxy-D-arabino-heptulosonate-7-phosphate (DAHP). This is Phospho-2-dehydro-3-deoxyheptonate aldolase, Trp-sensitive (aroH) from Escherichia coli O6:H1 (strain CFT073 / ATCC 700928 / UPEC).